The sequence spans 279 residues: MPEYVREKLTLNFPLVTEYLVKRIKDYINNSGKSGGIIGLSGGIDSSVASVLLSKATENFHVLLMPSSSTPKEDLDHAFMILRLINATESKYTIINIDPIVDQFRLAVKTNDKIISGNIKARSRMILLYAFAQKFNYLVVGTGDKSELMLGYFTKYGDGGVDILPLGDLYKTQVRMLGRYLGVPEDIVKKPPSPALWEGQTAEGEIGLDYETIDSILYLRFEEMRSENEISALVNVPIDLVRRIVRMVKISQHKRLPPEIFRLSGRSINSDWRYPRQWA.

ATP is bound at residue 39 to 46; that stretch reads GLSGGIDS. Residue D45 participates in Mg(2+) binding. Residue R122 coordinates deamido-NAD(+). ATP is bound at residue T142. E147 contributes to the Mg(2+) binding site. 2 residues coordinate deamido-NAD(+): K155 and D162. K171 and S193 together coordinate ATP. 253–254 serves as a coordination point for deamido-NAD(+); that stretch reads HK.

The protein belongs to the NAD synthetase family. Homodimer.

It carries out the reaction deamido-NAD(+) + NH4(+) + ATP = AMP + diphosphate + NAD(+) + H(+). The protein operates within cofactor biosynthesis; NAD(+) biosynthesis; NAD(+) from deamido-NAD(+) (ammonia route): step 1/1. Its function is as follows. Catalyzes the ATP-dependent amidation of deamido-NAD to form NAD. Uses ammonia as a nitrogen source. The polypeptide is NH(3)-dependent NAD(+) synthetase (Sulfolobus acidocaldarius (strain ATCC 33909 / DSM 639 / JCM 8929 / NBRC 15157 / NCIMB 11770)).